A 135-amino-acid chain; its full sequence is DNA-directed RNA polymerase subunit omega (135 aa).

It belongs to the RNA polymerase subunit omega family. As to quaternary structure, the RNAP catalytic core consists of 2 alpha, 1 beta, 1 beta' and 1 omega subunit. When a sigma factor is associated with the core the holoenzyme is formed, which can initiate transcription.

The enzyme catalyses RNA(n) + a ribonucleoside 5'-triphosphate = RNA(n+1) + diphosphate. Promotes RNA polymerase assembly. Latches the N- and C-terminal regions of the beta' subunit thereby facilitating its interaction with the beta and alpha subunits. The chain is DNA-directed RNA polymerase subunit omega from Sinorhizobium medicae (strain WSM419) (Ensifer medicae).